Reading from the N-terminus, the 449-residue chain is Tubulin beta chain (449 aa).

Residues Q11, E69, S138, G142, T143, G144, N204, and N226 each contribute to the GTP site. E69 serves as a coordination point for Mg(2+). The disordered stretch occupies residues 426-449 (QDATAEEEGEFDEEEGVMDAEGAA). The span at 429-443 (TAEEEGEFDEEEGVM) shows a compositional bias: acidic residues.

The protein belongs to the tubulin family. In terms of assembly, dimer of alpha and beta chains. A typical microtubule is a hollow water-filled tube with an outer diameter of 25 nm and an inner diameter of 15 nM. Alpha-beta heterodimers associate head-to-tail to form protofilaments running lengthwise along the microtubule wall with the beta-tubulin subunit facing the microtubule plus end conferring a structural polarity. Microtubules usually have 13 protofilaments but different protofilament numbers can be found in some organisms and specialized cells. The cofactor is Mg(2+).

It localises to the cytoplasm. The protein resides in the cytoskeleton. Tubulin is the major constituent of microtubules, a cylinder consisting of laterally associated linear protofilaments composed of alpha- and beta-tubulin heterodimers. Microtubules grow by the addition of GTP-tubulin dimers to the microtubule end, where a stabilizing cap forms. Below the cap, tubulin dimers are in GDP-bound state, owing to GTPase activity of alpha-tubulin. This is Tubulin beta chain from Eimeria tenella (Coccidian parasite).